The chain runs to 128 residues: Small ribosomal subunit protein uS11 (128 aa).

This sequence belongs to the universal ribosomal protein uS11 family. As to quaternary structure, part of the 30S ribosomal subunit. Interacts with proteins S7 and S18. Binds to IF-3.

Located on the platform of the 30S subunit, it bridges several disparate RNA helices of the 16S rRNA. Forms part of the Shine-Dalgarno cleft in the 70S ribosome. The sequence is that of Small ribosomal subunit protein uS11 from Onion yellows phytoplasma (strain OY-M).